Consider the following 533-residue polypeptide: NEDD8-activating enzyme E1 regulatory subunit (533 aa).

The interaction with uba3 stretch occupies residues 330 to 343; it reads DMIADSDKFIKLQN.

The protein belongs to the ubiquitin-activating E1 family. ULA1 subfamily. In terms of assembly, heterodimer of uba3 and nae1. The complex binds nedd8 and ube2m.

Its pathway is protein modification; protein neddylation. Regulatory subunit of the dimeric uba3-nae1 E1 enzyme. E1 activates nedd8 by first adenylating its C-terminal glycine residue with ATP, thereafter linking this residue to the side chain of the catalytic cysteine, yielding a nedd8-uba3 thioester and free AMP. E1 finally transfers nedd8 to the catalytic cysteine of ube2m. The covalent attachment of nedd8 to target proteins is known as 'neddylation' and the process is involved in the regulation of cell growth, viability and development. This Xenopus laevis (African clawed frog) protein is NEDD8-activating enzyme E1 regulatory subunit (nae1).